A 244-amino-acid polypeptide reads, in one-letter code: MDSSKITFEYETAYELLVRLGADGLFLHTSLPTLNKVLELVPGKCYELDGDIGSGKTQLCYSLAAKLLLTKKTAKIGWISAVPLRTDHLSQHISSTDADETSHLLDRIVCKRVEMVSELRDSLNALCETINMQLVIVENIDAILHDTAYDREMGRNVQIDISERLRKLTRSGITVMVTNHITYWRGYPAPALGNFWASQIENRFFVERRSEESNVRSVSTMRGGNEKTIRVDFEISDGGLKAVV.

In terms of assembly, interacts with brc-2 and rad-51.

The protein resides in the nucleus. In terms of biological role, has a role in the homologous recombination repair (HRR) of genomic DNA during meiosis. Required for rad-51 recruitment onto ssDNA gaps generated at stalled replication fork barriers. The sequence is that of RAD51-like protein 1 from Caenorhabditis briggsae.